Here is a 692-residue protein sequence, read N- to C-terminus: Elongation factor G (692 aa).

Residues 8 to 282 form the tr-type G domain; the sequence is ENTRNIGIMA…AVIDYLPSPL (275 aa). Residues 17 to 24, 81 to 85, and 135 to 138 each bind GTP; these read AHIDAGKT, DTPGH, and NKMD.

The protein belongs to the TRAFAC class translation factor GTPase superfamily. Classic translation factor GTPase family. EF-G/EF-2 subfamily.

It is found in the cytoplasm. Its function is as follows. Catalyzes the GTP-dependent ribosomal translocation step during translation elongation. During this step, the ribosome changes from the pre-translocational (PRE) to the post-translocational (POST) state as the newly formed A-site-bound peptidyl-tRNA and P-site-bound deacylated tRNA move to the P and E sites, respectively. Catalyzes the coordinated movement of the two tRNA molecules, the mRNA and conformational changes in the ribosome. The sequence is that of Elongation factor G from Bacillus cereus (strain G9842).